The following is a 354-amino-acid chain: Holliday junction branch migration complex subunit RuvB (354 aa).

Residues 1–38 (MSDFERTEFELPPGVGHSQNEDLNPQQTAGDSDIDTSL) are disordered. A large ATPase domain (RuvB-L) region spans residues 2–199 (SDFERTEFEL…FGFTAQMEFY (198 aa)). Polar residues predominate over residues 17–30 (HSQNEDLNPQQTAG). Residues Leu-38, Arg-39, Gly-80, Lys-83, Thr-84, Thr-85, 146-148 (EDF), Arg-189, Tyr-199, and Arg-236 contribute to the ATP site. Residue Thr-84 coordinates Mg(2+). The small ATPAse domain (RuvB-S) stretch occupies residues 200 to 270 (DTADLTRVVT…VARAALLVFD (71 aa)). The interval 273-354 (ESGLDRLDRA…LEPPEGTIGL (82 aa)) is head domain (RuvB-H). DNA-binding residues include Arg-328 and Arg-333.

It belongs to the RuvB family. As to quaternary structure, homohexamer. Forms an RuvA(8)-RuvB(12)-Holliday junction (HJ) complex. HJ DNA is sandwiched between 2 RuvA tetramers; dsDNA enters through RuvA and exits via RuvB. An RuvB hexamer assembles on each DNA strand where it exits the tetramer. Each RuvB hexamer is contacted by two RuvA subunits (via domain III) on 2 adjacent RuvB subunits; this complex drives branch migration. In the full resolvosome a probable DNA-RuvA(4)-RuvB(12)-RuvC(2) complex forms which resolves the HJ.

Its subcellular location is the cytoplasm. The catalysed reaction is ATP + H2O = ADP + phosphate + H(+). Its function is as follows. The RuvA-RuvB-RuvC complex processes Holliday junction (HJ) DNA during genetic recombination and DNA repair, while the RuvA-RuvB complex plays an important role in the rescue of blocked DNA replication forks via replication fork reversal (RFR). RuvA specifically binds to HJ cruciform DNA, conferring on it an open structure. The RuvB hexamer acts as an ATP-dependent pump, pulling dsDNA into and through the RuvAB complex. RuvB forms 2 homohexamers on either side of HJ DNA bound by 1 or 2 RuvA tetramers; 4 subunits per hexamer contact DNA at a time. Coordinated motions by a converter formed by DNA-disengaged RuvB subunits stimulates ATP hydrolysis and nucleotide exchange. Immobilization of the converter enables RuvB to convert the ATP-contained energy into a lever motion, pulling 2 nucleotides of DNA out of the RuvA tetramer per ATP hydrolyzed, thus driving DNA branch migration. The RuvB motors rotate together with the DNA substrate, which together with the progressing nucleotide cycle form the mechanistic basis for DNA recombination by continuous HJ branch migration. Branch migration allows RuvC to scan DNA until it finds its consensus sequence, where it cleaves and resolves cruciform DNA. The sequence is that of Holliday junction branch migration complex subunit RuvB from Corynebacterium jeikeium (strain K411).